The following is a 691-amino-acid chain: MNHSNARKLTTLHGFILKRNLSSFHASLKRFSDKKFFNPNHEDGGVVVERLCRANRFGEAIDVLCGQKLLREAVQLLGRAKKPPASTYCNLIQVCSQTRALEEGKKVHEHIRTSGFVPGIVIWNRLLRMYAKCGSLVDARKVFDEMPNRDLCSWNVMVNGYAEVGLLEEARKLFDEMTEKDSYSWTAMVTGYVKKDQPEEALVLYSLMQRVPNSRPNIFTVSIAVAAAAAVKCIRRGKEIHGHIVRAGLDSDEVLWSSLMDMYGKCGCIDEARNIFDKIVEKDVVSWTSMIDRYFKSSRWREGFSLFSELVGSCERPNEYTFAGVLNACADLTTEELGKQVHGYMTRVGFDPYSFASSSLVDMYTKCGNIESAKHVVDGCPKPDLVSWTSLIGGCAQNGQPDEALKYFDLLLKSGTKPDHVTFVNVLSACTHAGLVEKGLEFFYSITEKHRLSHTSDHYTCLVDLLARSGRFEQLKSVISEMPMKPSKFLWASVLGGCSTYGNIDLAEEAAQELFKIEPENPVTYVTMANIYAAAGKWEEEGKMRKRMQEIGVTKRPGSSWTEIKRKRHVFIAADTSHPMYNQIVEFLRELRKKMKEEGYVPATSLVLHDVEDEQKEENLVYHSEKLAVAFAILSTEEGTAIKVFKNLRSCVDCHGAIKFISNITKRKITVRDSTRFHCFENGQCSCGDYW.

12 PPR repeats span residues 84–118 (PAST…GFVP), 119–149 (GIVI…MPNR), 150–184 (DLCS…DSYS), 185–211 (WTAM…MQRV), 217–251 (NIFT…GLDS), 252–286 (DEVL…DVVS), 287–317 (WTSM…CERP), 318–352 (NEYT…GFDP), 353–383 (YSFA…CPKP), 384–418 (DLVS…GTKP), 419–449 (DHVT…ITEK), and 455–485 (TSDH…MPMK). The type E motif stretch occupies residues 490–565 (LWASVLGGCS…RPGSSWTEIK (76 aa)). A type E(+) motif region spans residues 566–596 (RKRHVFIAADTSHPMYNQIVEFLRELRKKMK). The type DYW motif stretch occupies residues 597 to 691 (EEGYVPATSL…NGQCSCGDYW (95 aa)).

It belongs to the PPR family. PCMP-H subfamily.

The sequence is that of Pentatricopeptide repeat-containing protein At4g37170 (PCMP-H5) from Arabidopsis thaliana (Mouse-ear cress).